Consider the following 264-residue polypeptide: uncharacterized protein (264 aa).

A helical transmembrane segment spans residues 7–27; sequence LTLGICLVLLIILIVGYVIMT.

It belongs to the staphylococcal tandem lipoprotein family.

It is found in the cell membrane. This is an uncharacterized protein from Staphylococcus aureus (strain MRSA252).